The following is a 237-amino-acid chain: Ribonuclease 3 (237 aa).

The RNase III domain maps to 3–133 (SRQPLLDALG…LLGAIYLQHG (131 aa)). Residue E43 participates in Mg(2+) binding. D47 is an active-site residue. Residues D119 and E122 each coordinate Mg(2+). The active site involves E122. Residues 160 to 228 (DWKTSLQELT…AAATWKALDV (69 aa)) form the DRBM domain.

The protein belongs to the ribonuclease III family. Homodimer. Mg(2+) serves as cofactor.

It is found in the cytoplasm. It carries out the reaction Endonucleolytic cleavage to 5'-phosphomonoester.. Functionally, digests double-stranded RNA. Involved in the processing of primary rRNA transcript to yield the immediate precursors to the large and small rRNAs (23S and 16S). Processes some mRNAs, and tRNAs when they are encoded in the rRNA operon. Processes pre-crRNA and tracrRNA of type II CRISPR loci if present in the organism. The chain is Ribonuclease 3 from Mycolicibacterium paratuberculosis (strain ATCC BAA-968 / K-10) (Mycobacterium paratuberculosis).